The sequence spans 966 residues: uncharacterized protein (966 aa).

The first 24 residues, 1–24 (MQGNLLKVLGVLAIVATLVCFIFA), serve as a signal peptide directing secretion. The next 6 helical transmembrane spans lie at 601–621 (IKAI…LGFA), 711–731 (LGLS…IVII), 743–763 (AFMA…FLLF), 785–805 (VVMM…LDFV), 822–842 (FIGT…INWF), and 855–875 (GVNM…YGYV). Residues 918–966 (TRQGITGRAEARLKQRNKTLDQAEKNRKNTQKEGGEKTNEEPPKPETPK) form a disordered region. A compositionally biased stretch (basic and acidic residues) spans 926–966 (AEARLKQRNKTLDQAEKNRKNTQKEGGEKTNEEPPKPETPK).

It belongs to the TrbL/VirB6 family.

The protein localises to the cell membrane. This is an uncharacterized protein from Rickettsia conorii (strain ATCC VR-613 / Malish 7).